Reading from the N-terminus, the 267-residue chain is 4-hydroxy-tetrahydrodipicolinate reductase (267 aa).

10–15 (GCLGKQ) is a binding site for NAD(+). Residue Arg-37 coordinates NADP(+). NAD(+) is bound by residues 99 to 101 (GTT) and 122 to 125 (TTNV). His-154 serves as the catalytic Proton donor/acceptor. His-155 contacts (S)-2,3,4,5-tetrahydrodipicolinate. Residue Lys-158 is the Proton donor of the active site. 164–165 (GT) is a binding site for (S)-2,3,4,5-tetrahydrodipicolinate.

It belongs to the DapB family.

The protein resides in the cytoplasm. The enzyme catalyses (S)-2,3,4,5-tetrahydrodipicolinate + NAD(+) + H2O = (2S,4S)-4-hydroxy-2,3,4,5-tetrahydrodipicolinate + NADH + H(+). It carries out the reaction (S)-2,3,4,5-tetrahydrodipicolinate + NADP(+) + H2O = (2S,4S)-4-hydroxy-2,3,4,5-tetrahydrodipicolinate + NADPH + H(+). It functions in the pathway amino-acid biosynthesis; L-lysine biosynthesis via DAP pathway; (S)-tetrahydrodipicolinate from L-aspartate: step 4/4. Its function is as follows. Catalyzes the conversion of 4-hydroxy-tetrahydrodipicolinate (HTPA) to tetrahydrodipicolinate. The sequence is that of 4-hydroxy-tetrahydrodipicolinate reductase from Ehrlichia chaffeensis (strain ATCC CRL-10679 / Arkansas).